The chain runs to 148 residues: Cyanate hydratase (148 aa).

Catalysis depends on residues R89, E92, and S115.

The protein belongs to the cyanase family.

It catalyses the reaction cyanate + hydrogencarbonate + 3 H(+) = NH4(+) + 2 CO2. Catalyzes the reaction of cyanate with bicarbonate to produce ammonia and carbon dioxide. The protein is Cyanate hydratase of Sulfurisphaera tokodaii (strain DSM 16993 / JCM 10545 / NBRC 100140 / 7) (Sulfolobus tokodaii).